The chain runs to 1366 residues: MAYSYTEKKRIRKDFGKLPPVLDVPYLLAIQLESYRNFLQEGKSLAERGELGLHGAFKSVFPMVSFSGNAALEYVDYRLGKPVFDVKECQLRGVTYAAPLRVRVRLIIYDKESSNKAIKDIREQEVYMGEIPLMTDNGTFVINGTERVIVSQLHRSPGVFFDHDRGKTHSSGKLLHSARIIPYRGSWLDFEFDPKDCVFVRIDRRRKLPATILLRALGYGTEQILDTFFDSTRFYLKRDGFEMDLVANRLRGETALFNIADANGELIVEEGRRITAKHIRVMEKSGLERLSVPLEYMLGKVTAKNLVHPATGELIAEANTELSVDLLEALVSSGITEVDTLYTNDLDNGPFISDTLRIDPTSNQLEALVEIYRMMRPGEPPTKESAEGLFQGLFFSEDRYDLSGVGRMKFNRRLGREEDTGAGVLDNDDIVAVLKTLLDIRNGNGMVDDIDHLGNRRVRSVGEMAENQFRVGLVRVERAVKERLSMAEADGLMPQDLLNAKPVAAAIKEFFGSSQLSQFMDQNNPLSEVTHKRRVSALGPGGLTRERAGFEVRDVHATHYGRVCPIETPEGPNIGLINSLSTYARTNSYGFLETPYRKIVDGKQTDETVYVSAIDEAKYVIAQASANVDAEGRLVDELVQVRHMHETTLIPKEKVNLMDVSPRQVVSVAASLIPFLEHDDANRALMGSNMQRQAVPTLKADKPVVGTGMEKNVAKDSGVCIVANRGGVIESVDASRIVVRVNSEETIAGEAGVDIYNLTKYVRSNQNTCINQRTLVMKGERIASGDIMADGPSVDMGELALGQNMRIAFMPWNGFNFEDSILVSERVVEEDRFTSIHIQELTCVARDTKLGPEEITADIPNVGEGALSKLDQSGIVYIGAEVEPGDILVGKVTPKGETQLTPEEKLLRAIFGEKASDVKDTSQRVKTGTRGTVIDVQVFTRDGIEKDDRAKFIEKSQLDQVRKDLNEEFRIVEKATFERLAEALIGQQAEGGPGLARNAIITEEYLANLDHPEWFKIRVANEDASEQLEKAQAALIERRKELDAKFEDKKRKLQTGDDLAPGVLKIVKVYVAIKRRIQPGDKMAGRHGNKGVISKIMPVEDMPYDENGDPVDIVLNPLGVPSRMNVGQVLETHLGAASKGLGRKINEMLVVEREKAEAVAELRSFLGEIYNGYEGDLRCARTEDLDSFTDEEILTLASNLTGGVPMASGAFDGAKESEIKRMLRLAGINESGQVKLFNGRTGDAFERPVTVGYMYMLKLNHLVDDKMHARSTGSYSLVTQQPLGGKAQFGGQRFGEMEVWALEAYGAAYTLQEMLTVKSDDVNGRTKMYKNIVDGDHRMEPGMPESFNVLVKEIRSLGIDIELENE.

This sequence belongs to the RNA polymerase beta chain family. In terms of assembly, the RNAP catalytic core consists of 2 alpha, 1 beta, 1 beta' and 1 omega subunit. When a sigma factor is associated with the core the holoenzyme is formed, which can initiate transcription.

It catalyses the reaction RNA(n) + a ribonucleoside 5'-triphosphate = RNA(n+1) + diphosphate. Its function is as follows. DNA-dependent RNA polymerase catalyzes the transcription of DNA into RNA using the four ribonucleoside triphosphates as substrates. This Marinomonas sp. (strain MWYL1) protein is DNA-directed RNA polymerase subunit beta.